A 241-amino-acid polypeptide reads, in one-letter code: Probable transcriptional regulatory protein LHK_02347 (241 aa).

This sequence belongs to the TACO1 family.

It localises to the cytoplasm. The chain is Probable transcriptional regulatory protein LHK_02347 from Laribacter hongkongensis (strain HLHK9).